The primary structure comprises 319 residues: Phosphatidylglycerol--prolipoprotein diacylglyceryl transferase (319 aa).

3 helical membrane passes run 21–41 (PIPIRAYAMCIIAGIIVAIWL), 50–70 (GGNPEIVLDAAIVAVPAGIIG), and 98–118 (NGGLGIWGAVILGGLAVAVFF). An a 1,2-diacyl-sn-glycero-3-phospho-(1'-sn-glycerol)-binding site is contributed by arginine 144. A run of 2 helical transmembrane segments spans residues 191 to 211 (VHPTFLYELLWNLLIFALLMW) and 254 to 274 (INTIVSAVVFAGAIIVFFLLK). A disordered region spans residues 295-319 (AVASPDGKPLPKAGEGIDGETPSTR).

It belongs to the Lgt family.

The protein resides in the cell membrane. It catalyses the reaction L-cysteinyl-[prolipoprotein] + a 1,2-diacyl-sn-glycero-3-phospho-(1'-sn-glycerol) = an S-1,2-diacyl-sn-glyceryl-L-cysteinyl-[prolipoprotein] + sn-glycerol 1-phosphate + H(+). It participates in protein modification; lipoprotein biosynthesis (diacylglyceryl transfer). Functionally, catalyzes the transfer of the diacylglyceryl group from phosphatidylglycerol to the sulfhydryl group of the N-terminal cysteine of a prolipoprotein, the first step in the formation of mature lipoproteins. The protein is Phosphatidylglycerol--prolipoprotein diacylglyceryl transferase of Corynebacterium glutamicum (strain R).